Here is a 144-residue protein sequence, read N- to C-terminus: Large ribosomal subunit protein uL15 (144 aa).

Residues 1 to 52 (MRLNSLSPAEGAKHSAKRLGRGISSGLGKTGGRGHKGQKSRTGGGVRRGFEG) form a disordered region.

The protein belongs to the universal ribosomal protein uL15 family. Part of the 50S ribosomal subunit.

In terms of biological role, binds to the 23S rRNA. This Actinobacillus pleuropneumoniae serotype 7 (strain AP76) protein is Large ribosomal subunit protein uL15.